Reading from the N-terminus, the 269-residue chain is MANYIVGDIQGCFDELMLLLAQCQFDKNQDTLWVAGDLVARGPKSLETLRFIKSLGNSAKVVLGNHDLHLMAVSLGIRNNKAKDKTAPIFASEDGNELLHWLRQQPLLAEHPEFVVCHAGISPQWDLATARLCAEEVESLLRSENYRWLIENMYCNQPDLWQDNLSGLDRYRYIINAFTRMRFCFADGRLDMDCKLPPSEVKESELMPWFTLPQRRALDKPVLFGHWAALEGYISEEVIGLDTGCVWNGSLTMIRWEDKQVFSQKALEN.

Belongs to the Ap4A hydrolase family.

It carries out the reaction P(1),P(4)-bis(5'-adenosyl) tetraphosphate + H2O = 2 ADP + 2 H(+). In terms of biological role, hydrolyzes diadenosine 5',5'''-P1,P4-tetraphosphate to yield ADP. In Vibrio vulnificus (strain CMCP6), this protein is Bis(5'-nucleosyl)-tetraphosphatase, symmetrical.